The primary structure comprises 250 residues: Triosephosphate isomerase (250 aa).

Residue 9–11 (NWK) coordinates substrate. His94 serves as the catalytic Electrophile. Glu166 functions as the Proton acceptor in the catalytic mechanism. Substrate is bound by residues Gly172, Ser212, and 233–234 (GG).

This sequence belongs to the triosephosphate isomerase family. Homodimer.

It is found in the cytoplasm. The catalysed reaction is D-glyceraldehyde 3-phosphate = dihydroxyacetone phosphate. It functions in the pathway carbohydrate biosynthesis; gluconeogenesis. It participates in carbohydrate degradation; glycolysis; D-glyceraldehyde 3-phosphate from glycerone phosphate: step 1/1. Involved in the gluconeogenesis. Catalyzes stereospecifically the conversion of dihydroxyacetone phosphate (DHAP) to D-glyceraldehyde-3-phosphate (G3P). The sequence is that of Triosephosphate isomerase from Treponema denticola (strain ATCC 35405 / DSM 14222 / CIP 103919 / JCM 8153 / KCTC 15104).